Here is a 259-residue protein sequence, read N- to C-terminus: Small ribosomal subunit protein uS2 (259 aa).

The protein belongs to the universal ribosomal protein uS2 family.

This is Small ribosomal subunit protein uS2 from Streptococcus pneumoniae (strain Hungary19A-6).